The chain runs to 251 residues: Sugar fermentation stimulation protein homolog (251 aa).

This sequence belongs to the SfsA family.

This chain is Sugar fermentation stimulation protein homolog, found in Prochlorococcus marinus (strain SARG / CCMP1375 / SS120).